The chain runs to 290 residues: Microtubule-associated protein P320 (290 aa).

8 consecutive repeats follow at residues 1-38 (SEYRQKRTVGEEVTTDMRHVDESHFLTTTHEAYKPIDP), 39-76 (SEYRQKRTVGEEVTTDMRHVDESHFLTTTHEAYKPIDP), 77-114 (SEYRQKRTVGEEVTTDMRHVDESHFLTTTHEAYKPIDP), 115-152 (SEYRQKRTVGEEVTTDMRHVDESHFLTTTHEAYKPIDP), 153-190 (SEYRQKRTVGEEVTTNMRHVDESHFLTTTHEAYKPIDP), 191-228 (SEYRQKRTVGEEVTTDMRHVDESHFLTTTHEAYKPIDP), 229-266 (SEYRQKRTVGEEVTTDMRHVDESHFLTTTHEAYKPIDP), and 267-290 (SEYRQKRTVGEEVTTDMRHVDESH). Residues 251-290 (SHFLTTTHEAYKPIDPSEYRQKRTVGEEVTTDMRHVDESH) form a disordered region. The span at 259-290 (EAYKPIDPSEYRQKRTVGEEVTTDMRHVDESH) shows a compositional bias: basic and acidic residues.

It is found in the cytoplasm. The protein localises to the cytoskeleton. This is Microtubule-associated protein P320 from Trypanosoma brucei brucei.